The sequence spans 181 residues: uncharacterized protein (181 aa).

It to M.pneumoniae MPN_635 C-terminal region.

This is an uncharacterized protein from Mycoplasma pneumoniae (strain ATCC 29342 / M129 / Subtype 1) (Mycoplasmoides pneumoniae).